The primary structure comprises 592 residues: Movement and RNA silencing protein VP6 (592 aa).

The disordered stretch occupies residues Ser-450 to His-469.

Its subcellular location is the host cell junction. The protein resides in the host plasmodesma. Functionally, transports viral genome to neighboring plant cells directly through plasmosdesmata, without any budding. The movement protein allows efficient cell to cell propagation, by bypassing the host cell wall barrier. Displays sequence non-specific nucleic acid binding activity. Acts as a suppressor of RNA-mediated gene silencing, also known as post-transcriptional gene silencing (PTGS), a mechanism of plant viral defense that limits the accumulation of viral RNAs. The protein is Movement and RNA silencing protein VP6 of Oryza latifolia (Indian wild rice).